The sequence spans 121 residues: Small ribosomal subunit protein uS13 (121 aa).

Residues 90–121 (RHRRGLPVRGQHTKNNARTRKGKKVSIAGRKK) are disordered.

The protein belongs to the universal ribosomal protein uS13 family. In terms of assembly, part of the 30S ribosomal subunit. Forms a loose heterodimer with protein S19. Forms two bridges to the 50S subunit in the 70S ribosome.

Its function is as follows. Located at the top of the head of the 30S subunit, it contacts several helices of the 16S rRNA. In the 70S ribosome it contacts the 23S rRNA (bridge B1a) and protein L5 of the 50S subunit (bridge B1b), connecting the 2 subunits; these bridges are implicated in subunit movement. Contacts the tRNAs in the A and P-sites. In Lactiplantibacillus plantarum (strain ATCC BAA-793 / NCIMB 8826 / WCFS1) (Lactobacillus plantarum), this protein is Small ribosomal subunit protein uS13.